The following is a 117-amino-acid chain: Large ribosomal subunit protein bL20c (117 aa).

It belongs to the bacterial ribosomal protein bL20 family.

It localises to the plastid. Binds directly to 23S ribosomal RNA and is necessary for the in vitro assembly process of the 50S ribosomal subunit. It is not involved in the protein synthesizing functions of that subunit. The protein is Large ribosomal subunit protein bL20c (rpl20) of Euglena longa (Euglenophycean alga).